Consider the following 142-residue polypeptide: Large ribosomal subunit protein uL11 (142 aa).

The protein belongs to the universal ribosomal protein uL11 family. Part of the ribosomal stalk of the 50S ribosomal subunit. Interacts with L10 and the large rRNA to form the base of the stalk. L10 forms an elongated spine to which L12 dimers bind in a sequential fashion forming a multimeric L10(L12)X complex. In terms of processing, one or more lysine residues are methylated.

In terms of biological role, forms part of the ribosomal stalk which helps the ribosome interact with GTP-bound translation factors. The protein is Large ribosomal subunit protein uL11 of Cronobacter sakazakii (strain ATCC BAA-894) (Enterobacter sakazakii).